We begin with the raw amino-acid sequence, 428 residues long: ATP phosphoribosyltransferase regulatory subunit (428 aa).

The protein belongs to the class-II aminoacyl-tRNA synthetase family. HisZ subfamily. Heteromultimer composed of HisG and HisZ subunits.

It is found in the cytoplasm. Its pathway is amino-acid biosynthesis; L-histidine biosynthesis; L-histidine from 5-phospho-alpha-D-ribose 1-diphosphate: step 1/9. Required for the first step of histidine biosynthesis. May allow the feedback regulation of ATP phosphoribosyltransferase activity by histidine. The polypeptide is ATP phosphoribosyltransferase regulatory subunit (Syntrophotalea carbinolica (strain DSM 2380 / NBRC 103641 / GraBd1) (Pelobacter carbinolicus)).